We begin with the raw amino-acid sequence, 295 residues long: Deleted in azoospermia-like (295 aa).

Positions 1 to 10 (MSAANPETPN) are enriched in polar residues. The interval 1 to 25 (MSAANPETPNSTISREASTQSSSAA) is disordered. Low complexity predominate over residues 11-25 (STISREASTQSSSAA). Residues 40–115 (NTVFVGGIDV…KKLKLGPAIR (76 aa)) form the RRM domain. Residues 80 to 132 (KGYGFVSFFNDVDVQKIVESQINFHGKKLKLGPAIRKQNLCAYHVQPRPLVFN) are homodimerization. Positions 167–190 (AYPTYPNSPVQVITGYQLPVYNYQ) constitute a DAZ domain. Tyr276 is subject to Phosphotyrosine.

It belongs to the RRM DAZ family. As to quaternary structure, homodimer and heterodimer. Forms a heterodimer with DAZ. Interacts with BOLL, DAZAP1 and DAZAP2. Interacts with PUM2 Multiple DAZL RRMs can bind to a single RNA containing multiple GUU triplets. As to expression, testis specific.

It is found in the cytoplasm. Its subcellular location is the nucleus. Its function is as follows. RNA-binding protein, which is essential for gametogenesis in both males and females. Plays a central role during spermatogenesis. Acts by binding to the 3'-UTR of mRNA, specifically recognizing GUU triplets, and thereby regulating the translation of key transcripts. The sequence is that of Deleted in azoospermia-like (DAZL) from Macaca fascicularis (Crab-eating macaque).